The chain runs to 369 residues: UDP-N-acetylglucosamine--N-acetylmuramyl-(pentapeptide) pyrophosphoryl-undecaprenol N-acetylglucosamine transferase (369 aa).

UDP-N-acetyl-alpha-D-glucosamine contacts are provided by residues 10–12 (TGG), N124, R166, S196, and Q300.

It belongs to the glycosyltransferase 28 family. MurG subfamily.

Its subcellular location is the cell membrane. It catalyses the reaction di-trans,octa-cis-undecaprenyl diphospho-N-acetyl-alpha-D-muramoyl-L-alanyl-D-glutamyl-meso-2,6-diaminopimeloyl-D-alanyl-D-alanine + UDP-N-acetyl-alpha-D-glucosamine = di-trans,octa-cis-undecaprenyl diphospho-[N-acetyl-alpha-D-glucosaminyl-(1-&gt;4)]-N-acetyl-alpha-D-muramoyl-L-alanyl-D-glutamyl-meso-2,6-diaminopimeloyl-D-alanyl-D-alanine + UDP + H(+). The protein operates within cell wall biogenesis; peptidoglycan biosynthesis. Functionally, cell wall formation. Catalyzes the transfer of a GlcNAc subunit on undecaprenyl-pyrophosphoryl-MurNAc-pentapeptide (lipid intermediate I) to form undecaprenyl-pyrophosphoryl-MurNAc-(pentapeptide)GlcNAc (lipid intermediate II). This is UDP-N-acetylglucosamine--N-acetylmuramyl-(pentapeptide) pyrophosphoryl-undecaprenol N-acetylglucosamine transferase from Desulfitobacterium hafniense (strain DSM 10664 / DCB-2).